We begin with the raw amino-acid sequence, 616 residues long: Chaperone protein HscA (616 aa).

The protein belongs to the heat shock protein 70 family.

Functionally, chaperone involved in the maturation of iron-sulfur cluster-containing proteins. Has a low intrinsic ATPase activity which is markedly stimulated by HscB. Involved in the maturation of IscU. The polypeptide is Chaperone protein HscA (Serratia proteamaculans (strain 568)).